The chain runs to 316 residues: Homoserine O-succinyltransferase (316 aa).

Cys-142 serves as the catalytic Acyl-thioester intermediate. Positions 163 and 192 each coordinate substrate. His-235 serves as the catalytic Proton acceptor. The active site involves Glu-237. Substrate is bound at residue Arg-249.

This sequence belongs to the MetA family.

The protein localises to the cytoplasm. The catalysed reaction is L-homoserine + succinyl-CoA = O-succinyl-L-homoserine + CoA. It participates in amino-acid biosynthesis; L-methionine biosynthesis via de novo pathway; O-succinyl-L-homoserine from L-homoserine: step 1/1. Transfers a succinyl group from succinyl-CoA to L-homoserine, forming succinyl-L-homoserine. This is Homoserine O-succinyltransferase from Shewanella amazonensis (strain ATCC BAA-1098 / SB2B).